Reading from the N-terminus, the 447-residue chain is Argininosuccinate synthase (447 aa).

Residues A17 to S25 and A43 contribute to the ATP site. Position 99 (Y99) interacts with L-citrulline. Positions 129 and 131 each coordinate ATP. Residues T131, N135, and D136 each contribute to the L-aspartate site. Position 135 (N135) interacts with L-citrulline. D136 lines the ATP pocket. Positions 139 and 192 each coordinate L-citrulline. Position 194 (D194) interacts with ATP. 3 residues coordinate L-citrulline: T201, E203, and E280.

The protein belongs to the argininosuccinate synthase family. Type 2 subfamily. In terms of assembly, homotetramer.

The protein resides in the cytoplasm. The enzyme catalyses L-citrulline + L-aspartate + ATP = 2-(N(omega)-L-arginino)succinate + AMP + diphosphate + H(+). Its pathway is amino-acid biosynthesis; L-arginine biosynthesis; L-arginine from L-ornithine and carbamoyl phosphate: step 2/3. In Klebsiella pneumoniae subsp. pneumoniae (strain ATCC 700721 / MGH 78578), this protein is Argininosuccinate synthase.